Here is a 122-residue protein sequence, read N- to C-terminus: Small ribosomal subunit protein uS13 (122 aa).

Residues 95-122 (GLPVHGQRTHTNARTRKGPRRGAVGKKK) are disordered.

Belongs to the universal ribosomal protein uS13 family. In terms of assembly, part of the 30S ribosomal subunit. Forms a loose heterodimer with protein S19. Forms two bridges to the 50S subunit in the 70S ribosome.

Located at the top of the head of the 30S subunit, it contacts several helices of the 16S rRNA. In the 70S ribosome it contacts the 23S rRNA (bridge B1a) and protein L5 of the 50S subunit (bridge B1b), connecting the 2 subunits; these bridges are implicated in subunit movement. Contacts the tRNAs in the A and P-sites. This chain is Small ribosomal subunit protein uS13, found in Desulfovibrio desulfuricans (strain ATCC 27774 / DSM 6949 / MB).